Reading from the N-terminus, the 745-residue chain is Probable xyloglucan glycosyltransferase 3 (745 aa).

The next 2 membrane-spanning stretches (helical) occupy residues 116 to 136 (GFLL…LKGW) and 196 to 216 (IDYI…LFMV). Residue D300 is part of the active site. Substrate contacts are provided by D359 and D361. D453 is a catalytic residue. The next 4 helical transmembrane spans lie at 531 to 551 (LILP…TMFV), 556 to 576 (LPIW…ILPA), 695 to 715 (IFKK…RSLL), and 720 to 740 (LHFY…LDLI).

The protein belongs to the glycosyltransferase 2 family. Plant cellulose synthase-like C subfamily.

Its subcellular location is the golgi apparatus membrane. Its function is as follows. Probable beta-1,4-glucan synthase rather involved in the synthesis of the xyloglucan backbone than cellulose. Seems to work simultaneously with xyloglucan 6-xylosyltransferase. Xyloglucan is a noncellulosic polysaccharides of plant cell wall and consists of a glucan backbone substituted by xylose, galactose and fucose. The chain is Probable xyloglucan glycosyltransferase 3 (CSLC3) from Oryza sativa subsp. japonica (Rice).